The sequence spans 214 residues: Probable transaldolase (214 aa).

Lys83 functions as the Schiff-base intermediate with substrate in the catalytic mechanism.

The protein belongs to the transaldolase family. Type 3B subfamily.

It is found in the cytoplasm. It carries out the reaction D-sedoheptulose 7-phosphate + D-glyceraldehyde 3-phosphate = D-erythrose 4-phosphate + beta-D-fructose 6-phosphate. The protein operates within carbohydrate degradation; pentose phosphate pathway; D-glyceraldehyde 3-phosphate and beta-D-fructose 6-phosphate from D-ribose 5-phosphate and D-xylulose 5-phosphate (non-oxidative stage): step 2/3. Transaldolase is important for the balance of metabolites in the pentose-phosphate pathway. This chain is Probable transaldolase, found in Clostridium botulinum (strain Alaska E43 / Type E3).